Reading from the N-terminus, the 78-residue chain is Putative membrane protein insertion efficiency factor (78 aa).

The protein belongs to the UPF0161 family.

Its subcellular location is the cell inner membrane. Functionally, could be involved in insertion of integral membrane proteins into the membrane. This is Putative membrane protein insertion efficiency factor from Roseobacter denitrificans (strain ATCC 33942 / OCh 114) (Erythrobacter sp. (strain OCh 114)).